Consider the following 363-residue polypeptide: Spermidine/putrescine import ATP-binding protein PotA (363 aa).

An ABC transporter domain is found at 4–234 (LELRNVIRRF…PANRFIADFI (231 aa)). 36–43 (GPSGCGKT) lines the ATP pocket.

It belongs to the ABC transporter superfamily. Spermidine/putrescine importer (TC 3.A.1.11.1) family. As to quaternary structure, the complex is composed of two ATP-binding proteins (PotA), two transmembrane proteins (PotB and PotC) and a solute-binding protein (PotD).

Its subcellular location is the cell inner membrane. The enzyme catalyses ATP + H2O + polyamine-[polyamine-binding protein]Side 1 = ADP + phosphate + polyamineSide 2 + [polyamine-binding protein]Side 1.. In terms of biological role, part of the ABC transporter complex PotABCD involved in spermidine/putrescine import. Responsible for energy coupling to the transport system. This Nitrosomonas eutropha (strain DSM 101675 / C91 / Nm57) protein is Spermidine/putrescine import ATP-binding protein PotA.